Consider the following 451-residue polypeptide: Cyclin-dependent kinase 18 (451 aa).

Residues 39–61 (RNEDGRDEPGQLSPGVQYQQRQN) form a disordered region. S51 carries the phosphoserine modification. The span at 52–61 (PGVQYQQRQN) shows a compositional bias: polar residues. Phosphoserine is present on residues S66 and S109. The 282-residue stretch at 121–402 (YVKLDKLGEG…AEAALSHPYF (282 aa)) folds into the Protein kinase domain. ATP contacts are provided by residues 127-135 (LGEGTYATV) and K150. D242 functions as the Proton acceptor in the catalytic mechanism. S417 and S420 each carry phosphoserine.

Belongs to the protein kinase superfamily. CMGC Ser/Thr protein kinase family. CDC2/CDKX subfamily. In brain, kidney, intestine and at a much lower level, in fetal tissues.

It carries out the reaction L-seryl-[protein] + ATP = O-phospho-L-seryl-[protein] + ADP + H(+). The enzyme catalyses L-threonyl-[protein] + ATP = O-phospho-L-threonyl-[protein] + ADP + H(+). In terms of biological role, may play a role in signal transduction cascades in terminally differentiated cells. This chain is Cyclin-dependent kinase 18 (Cdk18), found in Rattus norvegicus (Rat).